A 251-amino-acid polypeptide reads, in one-letter code: CDP-diacylglycerol pyrophosphatase (251 aa).

The helical transmembrane segment at 5–25 (GYFLLAVIVIVAAAGVGYWKF) threads the bilayer.

This sequence belongs to the Cdh family.

The protein localises to the cell inner membrane. The catalysed reaction is a CDP-1,2-diacyl-sn-glycerol + H2O = a 1,2-diacyl-sn-glycero-3-phosphate + CMP + 2 H(+). It participates in phospholipid metabolism; CDP-diacylglycerol degradation; phosphatidate from CDP-diacylglycerol: step 1/1. The protein is CDP-diacylglycerol pyrophosphatase of Salmonella enteritidis PT4 (strain P125109).